Consider the following 76-residue polypeptide: Protein CASC2, isoforms 1/2 (76 aa).

The segment at 1–20 (MAGTRGLMLLGPGPVAGPRD) is disordered.

This is Protein CASC2, isoforms 1/2 (CASC2) from Homo sapiens (Human).